The following is a 78-amino-acid chain: RNA-binding protein KhpA (78 aa).

The KH domain occupies 29–78 (TIIYELSVAKPDIGKIIGKEGRTIKAIRTLLVSVASRNNVRVSLEIMEEK).

This sequence belongs to the KhpA RNA-binding protein family.

The protein localises to the cytoplasm. A probable RNA-binding protein. The sequence is that of RNA-binding protein KhpA from Chlamydia pneumoniae (Chlamydophila pneumoniae).